A 1755-amino-acid chain; its full sequence is Transposon Ty1-GR1 Gag-Pol polyprotein (1755 aa).

Residues M1 to S16 show a composition bias toward low complexity. 3 disordered regions span residues M1–Q93, P126–P173, and G352–T421. Composition is skewed to polar residues over residues T48–S60, S71–Q93, and Q127–F152. Residues T153–T165 show a composition bias toward low complexity. The RNA-binding stretch occupies residues N299–H401. Residues N402–S418 are compositionally biased toward low complexity. S416 carries the phosphoserine modification. D461 (for protease activity; shared with dimeric partner) is an active-site residue. Residues N583–C640 are integrase-type zinc finger-like. The 176-residue stretch at N660–P835 folds into the Integrase catalytic domain. Positions 671 and 736 each coordinate Mg(2+). 3 disordered regions span residues S956–K1087, R1092–P1111, and D1130–T1187. Residues S960–T969 show a composition bias toward low complexity. Residues S1005–T1015 are compositionally biased toward polar residues. A compositionally biased stretch (basic and acidic residues) spans E1038 to S1053. Composition is skewed to polar residues over residues Y1054–D1082 and P1101–P1111. A Bipartite nuclear localization signal motif is present at residues K1178–R1212. The Reverse transcriptase Ty1/copia-type domain maps to N1338 to Q1476. Residues D1346, D1427, D1428, D1610, E1652, and D1685 each contribute to the Mg(2+) site. Residues D1610–K1752 form the RNase H Ty1/copia-type domain.

As to quaternary structure, the capsid protein forms a homotrimer, from which the VLPs are assembled. The protease is a homodimer, whose active site consists of two apposed aspartic acid residues. Post-translationally, initially, virus-like particles (VLPs) are composed of the structural unprocessed proteins Gag and Gag-Pol, and also contain the host initiator methionine tRNA (tRNA(i)-Met) which serves as a primer for minus-strand DNA synthesis, and a dimer of genomic Ty RNA. Processing of the polyproteins occurs within the particle and proceeds by an ordered pathway, called maturation. First, the protease (PR) is released by autocatalytic cleavage of the Gag-Pol polyprotein yielding capsid protein p45 and a Pol-p154 precursor protein. This cleavage is a prerequisite for subsequent processing of Pol-p154 at the remaining sites to release the mature structural and catalytic proteins. Maturation takes place prior to the RT reaction and is required to produce transposition-competent VLPs.

The protein localises to the cytoplasm. It is found in the nucleus. The catalysed reaction is DNA(n) + a 2'-deoxyribonucleoside 5'-triphosphate = DNA(n+1) + diphosphate. The enzyme catalyses Endonucleolytic cleavage to 5'-phosphomonoester.. In terms of biological role, capsid protein (CA) is the structural component of the virus-like particle (VLP), forming the shell that encapsulates the retrotransposons dimeric RNA genome. The particles are assembled from trimer-clustered units and there are holes in the capsid shells that allow for the diffusion of macromolecules. CA also has nucleocapsid-like chaperone activity, promoting primer tRNA(i)-Met annealing to the multipartite primer-binding site (PBS), dimerization of Ty1 RNA and initiation of reverse transcription. Its function is as follows. The aspartyl protease (PR) mediates the proteolytic cleavages of the Gag and Gag-Pol polyproteins after assembly of the VLP. Functionally, reverse transcriptase/ribonuclease H (RT) is a multifunctional enzyme that catalyzes the conversion of the retro-elements RNA genome into dsDNA within the VLP. The enzyme displays a DNA polymerase activity that can copy either DNA or RNA templates, and a ribonuclease H (RNase H) activity that cleaves the RNA strand of RNA-DNA heteroduplexes during plus-strand synthesis and hydrolyzes RNA primers. The conversion leads to a linear dsDNA copy of the retrotransposon that includes long terminal repeats (LTRs) at both ends. Integrase (IN) targets the VLP to the nucleus, where a subparticle preintegration complex (PIC) containing at least integrase and the newly synthesized dsDNA copy of the retrotransposon must transit the nuclear membrane. Once in the nucleus, integrase performs the integration of the dsDNA into the host genome. This chain is Transposon Ty1-GR1 Gag-Pol polyprotein (TY1B-GR1), found in Saccharomyces cerevisiae (strain ATCC 204508 / S288c) (Baker's yeast).